We begin with the raw amino-acid sequence, 590 residues long: Cytidine monophosphate-N-acetylneuraminic acid hydroxylase (590 aa).

Positions 14 to 112 constitute a Rieske domain; it reads LSPVEVASLK…VEMDENNRLL (99 aa). Cys54, His56, Cys75, and His78 together coordinate [2Fe-2S] cluster.

This sequence belongs to the CMP-Neu5Ac hydroxylase family. Requires [2Fe-2S] cluster as cofactor.

The protein resides in the cytoplasm. It catalyses the reaction CMP-N-acetyl-beta-neuraminate + 2 Fe(II)-[cytochrome b5] + O2 + 2 H(+) = CMP-N-glycoloyl-beta-neuraminate + 2 Fe(III)-[cytochrome b5] + H2O. The protein operates within amino-sugar metabolism; N-acetylneuraminate metabolism. In terms of biological role, sialic acids are components of carbohydrate chains of glycoconjugates and are involved in cell-cell recognition and cell-pathogen interactions. Catalyzes the conversion of CMP-N-acetylneuraminic acid (CMP-Neu5Ac) into its hydroxylated derivative CMP-N-glycolylneuraminic acid (CMP-Neu5Gc), a sialic acid abundantly expressed at the surface of many cells. The chain is Cytidine monophosphate-N-acetylneuraminic acid hydroxylase from Pan troglodytes (Chimpanzee).